Consider the following 221-residue polypeptide: Adenylate kinase (221 aa).

10–15 serves as a coordination point for ATP; it reads GAGKGT. The NMP stretch occupies residues 30–59; the sequence is STGDMLRAAVKAGTPLGLEAKRYMDAGELV. AMP contacts are provided by residues Thr31, Arg36, 57-59, 85-88, and Gln92; these read ELV and GFPR. The tract at residues 122–159 is LID; the sequence is GRRMHPASGRTYHVKFNPPKVEGVDDVTGEPLIQRDDD. ATP contacts are provided by residues Arg123 and 132-133; that span reads TY. AMP contacts are provided by Arg156 and Arg167. Residue Gly207 coordinates ATP.

The protein belongs to the adenylate kinase family. In terms of assembly, monomer.

The protein localises to the cytoplasm. The enzyme catalyses AMP + ATP = 2 ADP. It functions in the pathway purine metabolism; AMP biosynthesis via salvage pathway; AMP from ADP: step 1/1. Catalyzes the reversible transfer of the terminal phosphate group between ATP and AMP. Plays an important role in cellular energy homeostasis and in adenine nucleotide metabolism. The polypeptide is Adenylate kinase (Paraburkholderia phymatum (strain DSM 17167 / CIP 108236 / LMG 21445 / STM815) (Burkholderia phymatum)).